The chain runs to 1839 residues: Mannuronan C5-epimerase AlgE3 (1839 aa).

PbH1 repeat units follow at residues 133-155, 157-179, 180-202, 204-226, 257-279, 280-302, 320-342, and 347-369; these read DRDVTLERVEIREMSGYGFDPHE, TINLTIRDSVAHDNGLDGFVADY, QVGGVFENNVSYNNDRHGFNIVT, TNDFVLSNNVAYGNGGAGLVVQR, THDVTLQNAEIYGNGLYGVRVYG, AQDVQLLDNQIHDNSQNGAYAEV, TTGTWLEGNVISGSANSTFGIQE, and TDYSSLYANTIDGVQNGTVRLYG. A compositionally biased stretch (polar residues) spans 372–386; that stretch reads STVSEQPSSGQQATL. Residues 372-392 form a disordered region; that stretch reads STVSEQPSSGQQATLEGTAGN. Hemolysin-type calcium-binding repeat units lie at residues 387–399, 406–422, 424–440, 538–550, 557–573, 574–591, 695–709, 714–730, and 732–748; these read EGTAGNDVLSGTG, GLAGNDRLDGGAGDDTL, GGAGRDTLTGGAGADTF, TGTEGNDNLSGTD, GYGGNDTLNGGAGNDIL, VGGAGRDTLTGGAGADVF, EGTDGNDSLQGTGAD, GLGGRDSLNGGAGDDVL, and GGAERDTLTGGTGADTF. PbH1 repeat units follow at residues 975-997, 999-1021, 1022-1044, 1046-1068, 1099-1121, 1122-1143, 1161-1183, and 1188-1210; these read DRNVTLERVEIREMSGYGFDPHE, TINLTIRDSVAHDNGLDGFVADY, LVDSVFENNVAYNNDRHGFNVVT, TYDFTLSNNVAYGNGGAGLVIQR, TNNITLQNAEIYGNGYSGVRLYG, TEDVQILNNQIHDNAQNVAYAE, TTGTWIEGNVISGSANSTYGIEE, and TDYSSLYANTIDGVQTGAVRLNG. The span at 1215–1236 shows a compositional bias: polar residues; it reads VSDQPGTGQQATLEGTTGNDTL. Positions 1215 to 1238 are disordered; that stretch reads VSDQPGTGQQATLEGTTGNDTLGG. Hemolysin-type calcium-binding repeat units follow at residues 1229–1243, 1247–1263, 1265–1281, 1398–1414, 1415–1432, 1536–1552, 1554–1571, 1670–1681, 1688–1704, and 1706–1722; these read GTTGNDTLGGSDAHE, GLDGDDRLDGGAGNDIL, GGVGRDTLTGGAGADTF, GHAGNDTLDGAGGDDIL, VGGAGSDSLTGGAGADVF, EGTAGNDSLQGTAADEV, HGGSGRDTLAGGAGADVF, GGDGNDTLSGGS, GGAGNDSLSGGAGNDIL, and GGAGRDTLSGGSGSDIF.

Belongs to the D-mannuronate C5-epimerase family. The cofactor is Ca(2+).

The protein localises to the secreted. The enzyme catalyses [(1-&gt;4)-beta-D-mannuronosyl](n) = [alginate](n). Its pathway is glycan biosynthesis; alginate biosynthesis. Inhibited by zinc. Its function is as follows. Converts beta-D-mannuronic acid (M) to alpha-L-guluronic acid (G), producing a polymer with gel-forming capacity, required for the formation of the cyst coat. This chain is Mannuronan C5-epimerase AlgE3, found in Azotobacter vinelandii.